Reading from the N-terminus, the 224-residue chain is 2,5-diamino-6-ribosylamino-4(3H)-pyrimidinone 5'-phosphate reductase (224 aa).

NADP(+) contacts are provided by residues Gly-16, Thr-57, Asp-61, 83–86, Val-134, and 156–159; these read SKLR and GGTL.

The protein belongs to the HTP reductase family. In terms of assembly, homodimer.

It catalyses the reaction 2,5-diamino-6-(1-D-ribitylamino)pyrimidin-4(3H)-one 5'-phosphate + NADP(+) = 2,5-diamino-6-(1-D-ribosylamino)pyrimidin-4(3H)-one 5'-phosphate + NADPH + H(+). The catalysed reaction is 2,5-diamino-6-(1-D-ribitylamino)pyrimidin-4(3H)-one 5'-phosphate + NAD(+) = 2,5-diamino-6-(1-D-ribosylamino)pyrimidin-4(3H)-one 5'-phosphate + NADH + H(+). The protein operates within cofactor biosynthesis; riboflavin biosynthesis. In terms of biological role, catalyzes an early step in riboflavin biosynthesis, the NAD(P)H-dependent reduction of the ribose side chain of 2,5-diamino-6-ribosylamino-4(3H)-pyrimidinone 5'-phosphate, yielding 2,5-diamino-6-ribitylamino-4(3H)-pyrimidinone 5'-phosphate. The beta anomer is the authentic substrate, and the alpha anomer can serve as substrate subsequent to spontaneous anomerization. NADPH and NADH function equally well as the reductants. Does not catalyze the reduction of 5-amino-6-(5-phospho-D-ribosylamino)uracil to 5-amino-6-(5-phospho-D-ribitylamino)uracil. The polypeptide is 2,5-diamino-6-ribosylamino-4(3H)-pyrimidinone 5'-phosphate reductase (arfC) (Methanocaldococcus jannaschii (strain ATCC 43067 / DSM 2661 / JAL-1 / JCM 10045 / NBRC 100440) (Methanococcus jannaschii)).